Reading from the N-terminus, the 285-residue chain is Golgi phosphoprotein 3-like (285 aa).

The segment at 1–43 (MTTLTHRTRRTEVSKSCEKKIESEEDTNQERSPDNEDPGDSKD) is disordered. Residues 10 to 43 (RTEVSKSCEKKIESEEDTNQERSPDNEDPGDSKD) show a composition bias toward basic and acidic residues. A 1,2-diacyl-sn-glycero-3-phospho-(1D-myo-inositol 4-phosphate)-binding residues include Trp-67 and Arg-76. Ser-112 carries the post-translational modification Phosphoserine. 2 residues coordinate a 1,2-diacyl-sn-glycero-3-phospho-(1D-myo-inositol 4-phosphate): Arg-157 and Arg-160. A beta-hairpin required for oligomerization region spans residues 176 to 187 (EKQNFLLFDMTT).

The protein belongs to the GOLPH3/VPS74 family. As to quaternary structure, homooligomer. Does not interact MYO18; differs from GOLPH3 by its inability to interact with MYO18. May interact with ARF1.

It localises to the golgi apparatus. The protein localises to the golgi stack membrane. Its subcellular location is the trans-Golgi network membrane. Functionally, phosphatidylinositol-4-phosphate-binding protein that may antagonize the action of GOLPH3 which is required for the process of vesicle budding at the Golgi and anterograde transport to the plasma membrane. This is Golgi phosphoprotein 3-like (Golph3l) from Rattus norvegicus (Rat).